Reading from the N-terminus, the 236-residue chain is Large ribosomal subunit protein uL3 (236 aa).

Disordered regions lie at residues 132–153 (SNRA…GMAQ) and 200–236 (KGGD…KKGG). The span at 133-145 (NRASHGNSRSHNV) shows a compositional bias: polar residues. Position 153 is an N5-methylglutamine (Gln153). Over residues 206 to 216 (VSPSIRSARPT) the composition is skewed to polar residues. A compositionally biased stretch (low complexity) spans 217-228 (NNGNVNAAAKGG).

This sequence belongs to the universal ribosomal protein uL3 family. Part of the 50S ribosomal subunit. Forms a cluster with proteins L14 and L19. In terms of processing, methylated by PrmB.

Its function is as follows. One of the primary rRNA binding proteins, it binds directly near the 3'-end of the 23S rRNA, where it nucleates assembly of the 50S subunit. In Nitrosospira multiformis (strain ATCC 25196 / NCIMB 11849 / C 71), this protein is Large ribosomal subunit protein uL3.